Here is a 275-residue protein sequence, read N- to C-terminus: N-acetyltransferase YodP (275 aa).

The N-acetyltransferase domain maps to 125-271 (FTMRKAETND…AEGLENMNIW (147 aa)).

It belongs to the acetyltransferase family.

The catalysed reaction is (3S)-3,6-diaminohexanoate + acetyl-CoA = (3S)-6-acetamido-3-aminohexanoate + CoA + H(+). In terms of biological role, in vitro, is able to catalyze the acetylation of beta-lysine to N6-acetyl-beta-lysine, an archaeal osmolyte produced by methanogenic archaea. Its physiological function has not yet been elucidated. The chain is N-acetyltransferase YodP (yodP) from Bacillus subtilis (strain 168).